We begin with the raw amino-acid sequence, 237 residues long: Probable F-box protein At1g53815 (237 aa).

The 32-residue stretch at 41–72 (ISNILSRLPLKSKAKCRCVSKLWSSIIRRPNY) folds into the F-box domain.

The protein is Probable F-box protein At1g53815 of Arabidopsis thaliana (Mouse-ear cress).